A 322-amino-acid polypeptide reads, in one-letter code: MHAIFCRRVAVGCSSPQLTKLVTKQASQSRHSLSHLLPFDLSSRFVPPYVVSRSARVHGFFAGKLGNTNLKLKFGNVMESRAGFFSSELPSHGFESGGFTGFQKRGWKSWINGANGVVFGLVIANAAVFTMWRVLGKDNMWMVKNFMLSRYSFMTGRIHTLITSGFSHVGATHIILNMMGLCYFGARIARSFGPRYLLKLYFAGALGGSVFFLSSHALSVISLKGQRVVPKDQLKVPIGKLGANGPVYAITLLDMLLYPKVTTYFGLMLRVPVFAGIYSLGLNIIKMLEGKNNNTLTSLDQLGGVVVAVIAWARIRKGRFCY.

Residues 1-52 constitute a chloroplast transit peptide; the sequence is MHAIFCRRVAVGCSSPQLTKLVTKQASQSRHSLSHLLPFDLSSRFVPPYVVS. The next 6 helical transmembrane spans lie at 110–130, 166–186, 201–221, 238–258, 265–285, and 295–315; these read WING…AVFT, FSHV…YFGA, YFAG…LSVI, IGKL…MLLY, FGLM…LNII, and TLTS…WARI.

This sequence belongs to the peptidase S54 family.

The protein localises to the plastid. The protein resides in the chloroplast membrane. Its function is as follows. Rhomboid-type serine protease that catalyzes intramembrane proteolysis. May cleave the plastid translocon component Tic40. The sequence is that of Rhomboid-like protein 16, chloroplastic from Arabidopsis thaliana (Mouse-ear cress).